The chain runs to 161 residues: Large ribosomal subunit protein uL15 (161 aa).

Residues 1-41 (MTKLNELAPAPGSTKGRMRVGRGPGSGKGKTAGRGVKGQKA) are disordered. Over residues 22–36 (RGPGSGKGKTAGRGV) the composition is skewed to gly residues.

The protein belongs to the universal ribosomal protein uL15 family. Part of the 50S ribosomal subunit.

In terms of biological role, binds to the 23S rRNA. This Caulobacter sp. (strain K31) protein is Large ribosomal subunit protein uL15.